Here is a 239-residue protein sequence, read N- to C-terminus: ATP-dependent dethiobiotin synthetase BioD (239 aa).

Position 15–20 (15–20 (EIGKTF)) interacts with ATP. Threonine 19 lines the Mg(2+) pocket. Lysine 40 is a catalytic residue. Residues aspartate 57, 118 to 121 (EGVG), and 178 to 179 (NH) contribute to the ATP site. The Mg(2+) site is built by aspartate 57 and glutamate 118.

It belongs to the dethiobiotin synthetase family. As to quaternary structure, homodimer. Mg(2+) serves as cofactor.

It is found in the cytoplasm. The enzyme catalyses (7R,8S)-7,8-diammoniononanoate + CO2 + ATP = (4R,5S)-dethiobiotin + ADP + phosphate + 3 H(+). The protein operates within cofactor biosynthesis; biotin biosynthesis; biotin from 7,8-diaminononanoate: step 1/2. In terms of biological role, catalyzes a mechanistically unusual reaction, the ATP-dependent insertion of CO2 between the N7 and N8 nitrogen atoms of 7,8-diaminopelargonic acid (DAPA, also called 7,8-diammoniononanoate) to form a ureido ring. The polypeptide is ATP-dependent dethiobiotin synthetase BioD (Burkholderia multivorans (strain ATCC 17616 / 249)).